Reading from the N-terminus, the 276-residue chain is NH(3)-dependent NAD(+) synthetase (276 aa).

43–50 (GISGGVDS) is an ATP binding site. A Mg(2+)-binding site is contributed by Asp49. Arg146 serves as a coordination point for deamido-NAD(+). Thr166 contributes to the ATP binding site. A Mg(2+)-binding site is contributed by Glu171. Residues Lys179 and Asp186 each contribute to the deamido-NAD(+) site. The ATP site is built by Lys195 and Thr217. 266 to 267 (HK) is a binding site for deamido-NAD(+).

The protein belongs to the NAD synthetase family. Homodimer.

The catalysed reaction is deamido-NAD(+) + NH4(+) + ATP = AMP + diphosphate + NAD(+) + H(+). The protein operates within cofactor biosynthesis; NAD(+) biosynthesis; NAD(+) from deamido-NAD(+) (ammonia route): step 1/1. In terms of biological role, catalyzes the ATP-dependent amidation of deamido-NAD to form NAD. Uses ammonia as a nitrogen source. The chain is NH(3)-dependent NAD(+) synthetase from Shewanella baltica (strain OS185).